The chain runs to 130 residues: Small ribosomal subunit protein uS8 (130 aa).

The protein belongs to the universal ribosomal protein uS8 family. As to quaternary structure, part of the 30S ribosomal subunit.

Functionally, one of the primary rRNA binding proteins, it binds directly to 16S rRNA central domain where it helps coordinate assembly of the platform of the 30S subunit. This chain is Small ribosomal subunit protein uS8, found in Methanococcus maripaludis (strain C5 / ATCC BAA-1333).